Consider the following 570-residue polypeptide: MFS-type transporter ptmT (570 aa).

Residues 1–11 show a composition bias toward polar residues; it reads MPDSGNIQLDT. The disordered stretch occupies residues 1–34; it reads MPDSGNIQLDTLQHKDHSQETTSHYEGGSQLPEQ. The next 14 helical transmembrane spans lie at 50-70, 94-114, 121-141, 151-171, 182-202, 210-230, 247-267, 278-298, 323-343, 356-376, 379-399, 413-433, 445-465, and 517-537; these read GLIR…CVGL, WYVS…GKIY, WTYL…AITP, AISG…LSNI, AFIG…GGVF, WCFY…FLFM, GLDW…LLAL, NVRI…WLLI, IYTI…PIWF, IMNL…SVLI, VGYM…GAGL, IGYQ…PLLV, VATA…SAIA, and VTHT…GAFI. N-linked (GlcNAc...) asparagine glycosylation is present at N541. The tract at residues 550–570 is disordered; it reads PEPLVPGGSHSGAERDSKNGT. The span at 561-570 shows a compositional bias: basic and acidic residues; sequence GAERDSKNGT.

This sequence belongs to the major facilitator superfamily. TCR/Tet family.

It is found in the cell membrane. MFS-type transporter; part of the gene cluster that mediates the biosynthesis of the indole diterpenes penitrems. May be involved in the efflux of penitrems. The protein is MFS-type transporter ptmT of Penicillium ochrochloron.